Reading from the N-terminus, the 65-residue chain is Large ribosomal subunit protein bL35 (65 aa).

Composition is skewed to basic residues over residues 1 to 16 (MPKM…RFKK) and 31 to 45 (HRFH…RQLR). The segment at 1–47 (MPKMKTHRASAKRFKKTANGGLKSASAYTSHRFHGKTKKQRRQLRGT) is disordered.

It belongs to the bacterial ribosomal protein bL35 family.

The chain is Large ribosomal subunit protein bL35 from Leuconostoc citreum (strain KM20).